The sequence spans 271 residues: Phosphonoacetaldehyde hydrolase (271 aa).

The active-site Nucleophile is the aspartate 12. 2 residues coordinate Mg(2+): aspartate 12 and alanine 14. Lysine 54 acts as the Schiff-base intermediate with substrate in catalysis. Aspartate 188 contacts Mg(2+).

It belongs to the HAD-like hydrolase superfamily. PhnX family. Homodimer. Requires Mg(2+) as cofactor.

It carries out the reaction phosphonoacetaldehyde + H2O = acetaldehyde + phosphate + H(+). In terms of biological role, involved in phosphonate degradation. The sequence is that of Phosphonoacetaldehyde hydrolase from Aliivibrio salmonicida (strain LFI1238) (Vibrio salmonicida (strain LFI1238)).